The following is a 120-amino-acid chain: Ribonuclease P protein component (120 aa).

The protein belongs to the RnpA family. In terms of assembly, consists of a catalytic RNA component (M1 or rnpB) and a protein subunit.

The catalysed reaction is Endonucleolytic cleavage of RNA, removing 5'-extranucleotides from tRNA precursor.. Functionally, RNaseP catalyzes the removal of the 5'-leader sequence from pre-tRNA to produce the mature 5'-terminus. It can also cleave other RNA substrates such as 4.5S RNA. The protein component plays an auxiliary but essential role in vivo by binding to the 5'-leader sequence and broadening the substrate specificity of the ribozyme. This chain is Ribonuclease P protein component, found in Desulfotalea psychrophila (strain LSv54 / DSM 12343).